Reading from the N-terminus, the 557-residue chain is MSDIEIAQANEATAMWPITKVAAGLGLSEDDLELYGKAKAKLSFSALNALKDKPFGKLVLVTSINPTPAGEGKSTITVGLGDALQQRGKHPVIALREPSLGPVMGMKGGATGGGYAQVVPMEDINLHFTGDMHALTTAVDTLAALIDNHLQQGNTLNIDPRRILWKRALDINDRALRHVTIGLGGPTSGVPREDGFDITVASELMAVLCLAENIADLKARIGRIVIGYTYDRQPVTVADLKVTGAIAMLLRDALKPNLVQTLEHTPAFIHGGPFANIAHGCNSVLATRTALQLGDIAITEAGFGADLGGEKFMDIKTPVLGKTPDAVVIVATVRALKYNGGVALKDLQTENVEALAQGFDNLKRHIHSMQSYGVPVVVAINRFTSDTDAEIQFLIDACAKLNVKAVTATVWADGGRGGLAVADAVLAALDQPAHFTRLYDPQSDVKTKIKTIVQKIYGGADVDYEGKANSALRTIVKNGWQDLPVCMAKTQYSLTDNAKTLGAPEGFTIHVRDIIPKLGAGFLVVMTGSVLTMPGLPKVPAALNMDVTDDGKISGLF.

67–74 (TPAGEGKS) provides a ligand contact to ATP.

It belongs to the formate--tetrahydrofolate ligase family.

It catalyses the reaction (6S)-5,6,7,8-tetrahydrofolate + formate + ATP = (6R)-10-formyltetrahydrofolate + ADP + phosphate. It participates in one-carbon metabolism; tetrahydrofolate interconversion. The polypeptide is Formate--tetrahydrofolate ligase (Lacticaseibacillus paracasei (strain ATCC 334 / BCRC 17002 / CCUG 31169 / CIP 107868 / KCTC 3260 / NRRL B-441) (Lactobacillus paracasei)).